A 217-amino-acid polypeptide reads, in one-letter code: Ras-related protein RABA1g (217 aa).

Glycine 20–serine 27 provides a ligand contact to GTP. Positions serine 42–phenylalanine 50 match the Effector region motif. GTP is bound by residues aspartate 68–glutamine 72, asparagine 126–aspartate 129, and serine 156–alanine 157. S-geranylgeranyl cysteine attachment occurs at residues cysteine 214 and cysteine 215.

The protein belongs to the small GTPase superfamily. Rab family.

It localises to the cell membrane. Its function is as follows. Intracellular vesicle trafficking and protein transport. This Arabidopsis thaliana (Mouse-ear cress) protein is Ras-related protein RABA1g (RABA1G).